Reading from the N-terminus, the 455-residue chain is Ribulose bisphosphate carboxylase large chain (455 aa).

N6,N6,N6-trimethyllysine is present on Lys-5. Substrate is bound by residues Asn-114 and Thr-164. Lys-166 functions as the Proton acceptor in the catalytic mechanism. Lys-168 serves as a coordination point for substrate. Mg(2+) contacts are provided by Lys-192, Asp-194, and Glu-195. Lys-192 bears the N6-carboxylysine mark. The Proton acceptor role is filled by His-285. Positions 286, 318, and 370 each coordinate substrate.

It belongs to the RuBisCO large chain family. Type I subfamily. In terms of assembly, heterohexadecamer of 8 large chains and 8 small chains. Mg(2+) is required as a cofactor.

The protein localises to the plastid. Its subcellular location is the chloroplast. The catalysed reaction is 2 (2R)-3-phosphoglycerate + 2 H(+) = D-ribulose 1,5-bisphosphate + CO2 + H2O. It catalyses the reaction D-ribulose 1,5-bisphosphate + O2 = 2-phosphoglycolate + (2R)-3-phosphoglycerate + 2 H(+). RuBisCO catalyzes two reactions: the carboxylation of D-ribulose 1,5-bisphosphate, the primary event in carbon dioxide fixation, as well as the oxidative fragmentation of the pentose substrate in the photorespiration process. Both reactions occur simultaneously and in competition at the same active site. The sequence is that of Ribulose bisphosphate carboxylase large chain from Tamarindus indica (Tamarind).